The primary structure comprises 219 residues: Thiamine-phosphate synthase (219 aa).

Residues 48 to 52 (QFRQK) and Asn84 contribute to the 4-amino-2-methyl-5-(diphosphooxymethyl)pyrimidine site. Mg(2+)-binding residues include Asp85 and Asp104. A 4-amino-2-methyl-5-(diphosphooxymethyl)pyrimidine-binding site is contributed by Ser123. 150–152 (TPS) lines the 2-[(2R,5Z)-2-carboxy-4-methylthiazol-5(2H)-ylidene]ethyl phosphate pocket. Lys153 contacts 4-amino-2-methyl-5-(diphosphooxymethyl)pyrimidine. Residues Gly181 and 199 to 200 (IS) each bind 2-[(2R,5Z)-2-carboxy-4-methylthiazol-5(2H)-ylidene]ethyl phosphate.

This sequence belongs to the thiamine-phosphate synthase family. Mg(2+) is required as a cofactor.

The catalysed reaction is 2-[(2R,5Z)-2-carboxy-4-methylthiazol-5(2H)-ylidene]ethyl phosphate + 4-amino-2-methyl-5-(diphosphooxymethyl)pyrimidine + 2 H(+) = thiamine phosphate + CO2 + diphosphate. The enzyme catalyses 2-(2-carboxy-4-methylthiazol-5-yl)ethyl phosphate + 4-amino-2-methyl-5-(diphosphooxymethyl)pyrimidine + 2 H(+) = thiamine phosphate + CO2 + diphosphate. It catalyses the reaction 4-methyl-5-(2-phosphooxyethyl)-thiazole + 4-amino-2-methyl-5-(diphosphooxymethyl)pyrimidine + H(+) = thiamine phosphate + diphosphate. It participates in cofactor biosynthesis; thiamine diphosphate biosynthesis; thiamine phosphate from 4-amino-2-methyl-5-diphosphomethylpyrimidine and 4-methyl-5-(2-phosphoethyl)-thiazole: step 1/1. Condenses 4-methyl-5-(beta-hydroxyethyl)thiazole monophosphate (THZ-P) and 2-methyl-4-amino-5-hydroxymethyl pyrimidine pyrophosphate (HMP-PP) to form thiamine monophosphate (TMP). This Helicobacter pylori (strain HPAG1) protein is Thiamine-phosphate synthase.